A 347-amino-acid chain; its full sequence is Chaperone protein DnaJ 1 (347 aa).

A J domain is found at Asp5 to Ala75. A compositionally biased stretch (low complexity) spans Ala68–Asp77. Residues Ala68–Ala91 are disordered. The CR-type zinc finger occupies Gly107 to Ala181. 8 residues coordinate Zn(2+): Cys120, Cys123, Cys137, Cys140, Cys155, Cys158, Cys169, and Cys172. 4 CXXCXGXG motif repeats span residues Cys120–Gly127, Cys137–Gly144, Cys155–Gly162, and Cys169–Gly176.

It belongs to the DnaJ family. As to quaternary structure, homodimer. Requires Zn(2+) as cofactor.

It is found in the cytoplasm. Functionally, participates actively in the response to hyperosmotic and heat shock by preventing the aggregation of stress-denatured proteins and by disaggregating proteins, also in an autonomous, DnaK-independent fashion. Unfolded proteins bind initially to DnaJ; upon interaction with the DnaJ-bound protein, DnaK hydrolyzes its bound ATP, resulting in the formation of a stable complex. GrpE releases ADP from DnaK; ATP binding to DnaK triggers the release of the substrate protein, thus completing the reaction cycle. Several rounds of ATP-dependent interactions between DnaJ, DnaK and GrpE are required for fully efficient folding. Also involved, together with DnaK and GrpE, in the DNA replication of plasmids through activation of initiation proteins. The polypeptide is Chaperone protein DnaJ 1 (Aromatoleum aromaticum (strain DSM 19018 / LMG 30748 / EbN1) (Azoarcus sp. (strain EbN1))).